The following is a 449-amino-acid chain: Hyaluronidase-2 (449 aa).

An N-terminal signal peptide occupies residues 1–23; the sequence is MYHLWIKCLAAWIFLKRCNGVHA. Intrachain disulfides connect C47–C340 and C211–C227. 3 N-linked (GlcNAc...) asparagine glycosylation sites follow: N67, N103, and N111. E135 serves as the catalytic Proton donor. N-linked (GlcNAc...) asparagine glycosylation occurs at N153. N357 carries N-linked (GlcNAc...) asparagine glycosylation. 3 cysteine pairs are disulfide-bonded: C365/C376, C370/C427, and C429/C438. N-linked (GlcNAc...) asparagine glycosylation occurs at N401. The region spanning 427–438 is the EGF-like domain; it reads CQCYQGWKGLYC.

Belongs to the glycosyl hydrolase 56 family. Monomer. As to expression, expressed by the venom gland.

It localises to the secreted. The catalysed reaction is Random hydrolysis of (1-&gt;4)-linkages between N-acetyl-beta-D-glucosamine and D-glucuronate residues in hyaluronate.. Its function is as follows. Snake venom endo-hyaluronidase that degrades hyaluronan to smaller oligosaccharide fragments. In venom, it is not toxic by itself, but increases the diffusion of other venom proteins by degrading the extracellular matrix. In addition, it displays antiedematogenic activity. The protein is Hyaluronidase-2 of Bitis arietans (African puff adder).